The sequence spans 645 residues: Beta-galactosidase BgaA (645 aa).

Arginine 102 is a substrate binding site. Cysteine 106 contributes to the Zn(2+) binding site. Asparagine 140 is a binding site for substrate. The active-site Proton donor is glutamate 141. Positions 150, 152, and 155 each coordinate Zn(2+). The Nucleophile role is filled by glutamate 312. Residues tryptophan 320 and 360–363 each bind substrate; that span reads EQMH.

The protein belongs to the glycosyl hydrolase 42 family.

The enzyme catalyses Hydrolysis of terminal non-reducing beta-D-galactose residues in beta-D-galactosides.. Hydrolyzes chromogen 5-bromo-4-chloro-3-indolyl-beta-D-galactopyranoside (X-Gal) and p-nitrophenyl-beta-D-galactoside (pNPGal). This chain is Beta-galactosidase BgaA, found in Thermus sp.